We begin with the raw amino-acid sequence, 75 residues long: Mitochondrial import receptor subunit TOM7-1 (75 aa).

Met1 carries the post-translational modification N-acetylmethionine. Residues 1-28 (MESTISLKVNKGKGKGSKGASSSDDKSK) are disordered. Residues 1–46 (MESTISLKVNKGKGKGSKGASSSDDKSKFDVVKEWTNWSLKKAKVV) lie on the Cytoplasmic side of the membrane. A helical transmembrane segment spans residues 47-64 (THYGFIPLVIFVGMNSDP). Over 65 to 75 (KPHLFQLLSPV) the chain is Mitochondrial intermembrane.

Belongs to the Tom7 family. Forms part of the preprotein translocase complex of the outer mitochondrial membrane (TOM complex) which consists of at least 6 different proteins (TOM5, TOM6, TOM7, TOM20, TOM22/TOM9 and TOM40). As to expression, expressed in roots, flowers, young cotyledons and leaves.

It is found in the mitochondrion outer membrane. Functionally, seems to act as a modulator of the dynamics of the mitochondrial protein transport machinery. Seems to promote the dissociation of subunits of the outer membrane translocase. This chain is Mitochondrial import receptor subunit TOM7-1 (TOM7-1), found in Arabidopsis thaliana (Mouse-ear cress).